The primary structure comprises 992 residues: Ankyrin repeat domain-containing protein 18A (992 aa).

ANK repeat units lie at residues 67–96 (KDRT…QIDI), 100–129 (LNRT…NPNI), 133–162 (YGNT…NIEA), 166–195 (EGNT…NIHA), and 199–228 (FKRT…RISS). Residues 262–320 (NHLRNDNQETAAMKPANLKKRKERAKAEHNLKVASEEKQERLQRSENKQPQDSQSYGKK) are disordered. 4 coiled-coil regions span residues 278 to 310 (NLKK…ENKQ), 378 to 618 (KMIT…AERE), 683 to 713 (ISLL…CLEM), and 743 to 899 (FKKL…EAFA). Positions 286 to 310 (AKAEHNLKVASEEKQERLQRSENKQ) are enriched in basic and acidic residues.

The sequence is that of Ankyrin repeat domain-containing protein 18A (ANKRD18A) from Homo sapiens (Human).